A 338-amino-acid polypeptide reads, in one-letter code: uncharacterized protein (338 aa).

The segment at 1–72 (MASPPILSRE…LNPVEDYDSK (72 aa)) is disordered. The segment covering 24 to 38 (GGNSEVNIDPSASSS) has biased composition (polar residues). The segment covering 49–58 (ADTKIDPHLL) has biased composition (basic and acidic residues). Over residues 59–68 (EEDDLNPVED) the composition is skewed to acidic residues.

Its subcellular location is the cytoplasm. The protein localises to the nucleus. This is an uncharacterized protein from Schizosaccharomyces pombe (strain 972 / ATCC 24843) (Fission yeast).